Reading from the N-terminus, the 197-residue chain is HTH-type transcriptional repressor BdcR (197 aa).

An HTH tetR-type domain is found at 15–75; it reads RFAPEQAISA…RVLNEYVGTE (61 aa). The segment at residues 38-57 is a DNA-binding region (H-T-H motif); it reads SVAEVTDYLGINPPSLYAAF.

Its function is as follows. Negatively regulates expression of bdcA. The polypeptide is HTH-type transcriptional repressor BdcR (bdcR) (Escherichia coli (strain K12)).